A 177-amino-acid chain; its full sequence is Interleukin-1 receptor antagonist protein (177 aa).

The signal sequence occupies residues 1–25; the sequence is MEVSRYLCSYLISFLLFLFHSETAC. A disulfide bridge connects residues Cys-91 and Cys-141. Asn-109 carries N-linked (GlcNAc...) asparagine glycosylation.

It belongs to the IL-1 family.

It localises to the secreted. Anti-inflammatory antagonist of interleukin-1 family of proinflammatory cytokines such as interleukin-1beta/IL1B and interleukin-1alpha/IL1A. Protects from immune dysregulation and uncontrolled systemic inflammation triggered by IL1 for a range of innate stimulatory agents such as pathogens. The sequence is that of Interleukin-1 receptor antagonist protein (IL1RN) from Sus scrofa (Pig).